Reading from the N-terminus, the 310-residue chain is Probable RuBisCO transcriptional regulator (310 aa).

In terms of domain architecture, HTH lysR-type spans Phe6–Thr63. A DNA-binding region (H-T-H motif) is located at residues Phe23–Gln42.

The protein belongs to the LysR transcriptional regulatory family.

It is found in the plastid. The protein localises to the chloroplast. In terms of biological role, trans-acting transcriptional regulator of RuBisCO genes (rbcL and rbcS) expression. The protein is Probable RuBisCO transcriptional regulator (rbcR) of Guillardia theta (Cryptophyte).